Here is a 635-residue protein sequence, read N- to C-terminus: Chaperone protein HtpG (635 aa).

Residues 1-343 are a; substrate-binding; that stretch reads MSVETQKETL…SNDLSLNVSR (343 aa). Positions 344-560 are b; the sequence is EILQKDPIID…EQDMGLQMRQ (217 aa). Positions 561-635 are c; sequence ILEASGQKVP…LNKLLVELSV (75 aa).

The protein belongs to the heat shock protein 90 family. Homodimer.

It is found in the cytoplasm. Its function is as follows. Molecular chaperone. Has ATPase activity. This is Chaperone protein HtpG from Pseudomonas syringae pv. tomato (strain ATCC BAA-871 / DC3000).